The sequence spans 232 residues: Flagellar L-ring protein (232 aa).

A signal peptide spans 1-21; sequence MQKNAAHTYAISSLLVLSLTG. Cys-22 carries N-palmitoyl cysteine lipidation. The S-diacylglycerol cysteine moiety is linked to residue Cys-22.

This sequence belongs to the FlgH family. In terms of assembly, the basal body constitutes a major portion of the flagellar organelle and consists of four rings (L,P,S, and M) mounted on a central rod.

Its subcellular location is the cell outer membrane. The protein localises to the bacterial flagellum basal body. Functionally, assembles around the rod to form the L-ring and probably protects the motor/basal body from shearing forces during rotation. The chain is Flagellar L-ring protein from Shigella boydii serotype 4 (strain Sb227).